We begin with the raw amino-acid sequence, 931 residues long: Short transient receptor potential channel 6 (931 aa).

The segment at 1-24 (MNQSPAAFGPRRGGSPAVVAGAGA) is disordered. The Cytoplasmic segment spans residues 1–406 (MNQSPAAFGP…GLRQQTMAVK (406 aa)). Residues 13-24 (GGSPAVVAGAGA) show a composition bias toward low complexity. 3 ANK repeats span residues 131 to 160 (MGQN…LSRV), 162 to 188 (DALL…FAEG), and 217 to 246 (HDVT…RIER). Residues 407 to 427 (FLVVLAVAVGLPFLALVYWFA) traverse the membrane as a helical segment. At 428–438 (PCSKMGKIMRG) the chain is on the extracellular side. Residues 439-459 (PFMKFVAHAASFTIFLGLLVM) traverse the membrane as a helical segment. Topologically, residues 460–487 (NAADRFEGTKILPNETSTDHAKQLFRMK) are cytoplasmic. A helical transmembrane segment spans residues 488–508 (TSCFSWMEMLIISWVIGMIWA). Over 509–521 (ECKEIWTQGPKEY) the chain is Extracellular. Residues 522-542 (LFELWNMLDFGMLAIFAASFI) form a helical membrane-spanning segment. The Cytoplasmic portion of the chain corresponds to 543–592 (ARFMAFWHASKAQSIIDANDTLKDLTKVTLGDNVKYYNLARIKWDPSDPQ). A helical transmembrane segment spans residues 593 to 613 (IISEGLYAIAVVLSFSRIAYI). Over 614-636 (LPANESFGPLQISLGRTVKDIFK) the chain is Extracellular. Asn-617 carries an N-linked (GlcNAc...) asparagine glycan. The ANK 4 repeat unit spans residues 618–647 (ESFGPLQISLGRTVKDIFKFMVIFIMVFVA). A helical membrane pass occupies residues 637–657 (FMVIFIMVFVAFMIGMFNLYS). Residues 658–674 (YYIGAKQNEAFTTVEES) are Cytoplasmic-facing. Residues 675–695 (FKTLFWAIFGLSEVKSVVINY) traverse the membrane as a helical segment. Residues 696–706 (NHKFIENIGYV) are Extracellular-facing. A helical transmembrane segment spans residues 707–727 (LYGVYNVTMVIVLLNMLIAMI). Residues 728 to 931 (NSSFQEIEDD…MEPNQEESNR (204 aa)) lie on the Cytoplasmic side of the membrane. Ser-815 carries the phosphoserine modification.

This sequence belongs to the transient receptor (TC 1.A.4) family. STrpC subfamily. TRPC6 sub-subfamily. Homodimer; forms channel complex. Interacts with MX1 and RNF24. In terms of processing, phosphorylated by FYN, leading to an increase of TRPC6 channel activity.

It localises to the cell membrane. It carries out the reaction Ca(2+)(in) = Ca(2+)(out). Functionally, thought to form a receptor-activated non-selective calcium permeant cation channel. Probably is operated by a phosphatidylinositol second messenger system activated by receptor tyrosine kinases or G-protein coupled receptors. Activated by diacylglycerol (DAG) in a membrane-delimited fashion, independently of protein kinase C. Seems not to be activated by intracellular calcium store depletion. The chain is Short transient receptor potential channel 6 from Bos taurus (Bovine).